The chain runs to 573 residues: Probable D-xylulose kinase A (573 aa).

Substrate is bound by residues H97, R168, D284, and N285. ATP-binding positions include W366, 471–472 (GG), and N475.

Belongs to the FGGY kinase family.

The protein localises to the cytoplasm. It catalyses the reaction D-xylulose + ATP = D-xylulose 5-phosphate + ADP + H(+). Functionally, highly specific D-xylulose kinase which participates in the catabolism of xylose. Xylose is a major component of hemicelluloses such as xylan. Most fungi utilize D-xylose via three enzymatic reactions, xylose reductase (XR), xylitol dehydrogenase (XDH), and xylulokinase, to form xylulose 5-phosphate, which enters pentose phosphate pathway. This is Probable D-xylulose kinase A (xkiA) from Aspergillus clavatus (strain ATCC 1007 / CBS 513.65 / DSM 816 / NCTC 3887 / NRRL 1 / QM 1276 / 107).